A 142-amino-acid chain; its full sequence is Large ribosomal subunit protein uL13 (142 aa).

This sequence belongs to the universal ribosomal protein uL13 family. Part of the 50S ribosomal subunit.

In terms of biological role, this protein is one of the early assembly proteins of the 50S ribosomal subunit, although it is not seen to bind rRNA by itself. It is important during the early stages of 50S assembly. The sequence is that of Large ribosomal subunit protein uL13 from Akkermansia muciniphila (strain ATCC BAA-835 / DSM 22959 / JCM 33894 / BCRC 81048 / CCUG 64013 / CIP 107961 / Muc).